Reading from the N-terminus, the 114-residue chain is Evasin P1096 (114 aa).

Positions 1–23 are cleaved as a signal peptide; sequence MELNAFTILHIAVFIAVGYYANT. 3 disulfides stabilise this stretch: cysteine 47-cysteine 65, cysteine 51-cysteine 67, and cysteine 61-cysteine 78. N-linked (GlcNAc...) asparagine glycosylation is present at asparagine 50. Residues 89–114 are disordered; sequence DPSQDPSIDEAAPRESVSKRRSNGES. A compositionally biased stretch (basic and acidic residues) spans 99 to 114; the sequence is AAPRESVSKRRSNGES.

The protein resides in the secreted. Its function is as follows. Salivary chemokine-binding protein which binds to host chemokine CXCL8. The protein is Evasin P1096 of Ixodes ricinus (Common tick).